Consider the following 86-residue polypeptide: Small ribosomal subunit protein uS17 (86 aa).

Belongs to the universal ribosomal protein uS17 family. In terms of assembly, part of the 30S ribosomal subunit.

Functionally, one of the primary rRNA binding proteins, it binds specifically to the 5'-end of 16S ribosomal RNA. In Streptococcus equi subsp. equi (strain 4047), this protein is Small ribosomal subunit protein uS17.